A 143-amino-acid chain; its full sequence is Large ribosomal subunit protein uL11 (143 aa).

The protein belongs to the universal ribosomal protein uL11 family. Part of the ribosomal stalk of the 50S ribosomal subunit. Interacts with L10 and the large rRNA to form the base of the stalk. L10 forms an elongated spine to which L12 dimers bind in a sequential fashion forming a multimeric L10(L12)X complex. Post-translationally, one or more lysine residues are methylated.

Functionally, forms part of the ribosomal stalk which helps the ribosome interact with GTP-bound translation factors. This Ralstonia pickettii (strain 12J) protein is Large ribosomal subunit protein uL11.